The chain runs to 208 residues: MSKGTLYIVSAPSGAGKSSLINALLETNPTYDMKVSVSHTTRGMRPGEENGVHYNFISVEEFTELTEQESFLEHAEVFGNYYGTSRPWIEDQLNKGIDVFLDIDWQGARQIRIQMPAAKSLFILPPSKEELERRLNARGQDSETIIARRMQEARSEISHYNEYDYVIVNDDFDAALMDFKAIIRAERLKQDKQTAKYNSMLNALLAEQ.

Residues G4–R184 enclose the Guanylate kinase-like domain. A11–S18 is an ATP binding site.

This sequence belongs to the guanylate kinase family.

The protein resides in the cytoplasm. The catalysed reaction is GMP + ATP = GDP + ADP. Its function is as follows. Essential for recycling GMP and indirectly, cGMP. This Photobacterium profundum (strain SS9) protein is Guanylate kinase.